Consider the following 77-residue polypeptide: U8-lycotoxin-Ls1m (77 aa).

Residues 1–20 form the signal peptide; it reads MKLMIFTGLVLFAIVSLIEA. A propeptide spanning residues 21–26 is cleaved from the precursor; it reads QAENEK.

This sequence belongs to the neurotoxin 19 (CSTX) family. 08 (U8-Lctx) subfamily. Contains 4 disulfide bonds. Expressed by the venom gland.

Its subcellular location is the secreted. The sequence is that of U8-lycotoxin-Ls1m from Lycosa singoriensis (Wolf spider).